Reading from the N-terminus, the 353-residue chain is Lysophosphatidic acid receptor 3 (353 aa).

Over methionine 1–valine 31 the chain is Extracellular. A glycan (N-linked (GlcNAc...) asparagine) is linked at asparagine 15. Residues isoleucine 32–isoleucine 52 traverse the membrane as a helical segment. Residues alanine 53 to tyrosine 67 are Cytoplasmic-facing. A helical membrane pass occupies residues leucine 68 to phenylalanine 88. The Extracellular segment spans residues asparagine 89–arginine 101. The helical transmembrane segment at tryptophan 102–alanine 124 threads the bilayer. Over valine 125–threonine 146 the chain is Cytoplasmic. The helical transmembrane segment at leucine 147 to tryptophan 167 threads the bilayer. The Extracellular segment spans residues asparagine 168–serine 186. N-linked (GlcNAc...) asparagine glycosylation occurs at asparagine 172. A helical transmembrane segment spans residues tyrosine 187–leucine 207. Residues arginine 208–threonine 240 lie on the Cytoplasmic side of the membrane. The helical transmembrane segment at valine 241 to leucine 261 threads the bilayer. Topologically, residues aspartate 262 to arginine 276 are extracellular. A helical transmembrane segment spans residues tryptophan 277–aspartate 297. Over glutamate 298–serine 353 the chain is Cytoplasmic. Residue cysteine 309 is the site of S-palmitoyl cysteine attachment.

This sequence belongs to the G-protein coupled receptor 1 family. Most abundantly expressed in prostate, testes, pancreas, and heart, with moderate levels in lung and ovary. No detectable expression in brain, placenta, liver, skeletal muscle, kidney, spleen, thymus, small intestine, colon, or peripheral blood leukocytes.

The protein localises to the cell membrane. Receptor for lysophosphatidic acid (LPA), a mediator of diverse cellular activities. May play a role in the development of ovarian cancer. Seems to be coupled to the G(i)/G(o) and G(q) families of heteromeric G proteins. The polypeptide is Lysophosphatidic acid receptor 3 (LPAR3) (Homo sapiens (Human)).